Consider the following 299-residue polypeptide: Taste receptor type 2 member 5 (299 aa).

Met1 is a topological domain (extracellular). Residues 2–22 form a helical membrane-spanning segment; that stretch reads LSAGLGLLMLVAVIEFLIGLI. Topologically, residues 23–45 are cytoplasmic; it reads GNGILVVWSLREWIRKFSWSSYN. The helical transmembrane segment at 46–66 threads the bilayer; that stretch reads LIILGLAGCRFLLQWLIILDL. Over 67-82 the chain is Extracellular; sequence SLFPLFQSSSWLRYLN. Residues 83–103 form a helical membrane-spanning segment; sequence VFWVLVSQASLWFATFLSVFY. At 104 to 127 the chain is on the cytoplasmic side; the sequence is CKKITTFDRPAYLWLKQRAYNLSL. A helical transmembrane segment spans residues 128-148; the sequence is WCLLGYFIISLLLTVQVGLTV. Over 149–175 the chain is Extracellular; that stretch reads HHPPQGNSSIRYPFEHWQYLYVFQLNS. Residue Asn155 is glycosylated (N-linked (GlcNAc...) asparagine). A helical membrane pass occupies residues 176–196; the sequence is GSYLPLMVFLVSSGMLIISLY. Topologically, residues 197–223 are cytoplasmic; sequence THHKKMKVHSAGRRDARAKAHITALKS. Residues 224-244 form a helical membrane-spanning segment; the sequence is LGCFLLLHLVYIVASPFSITS. Residues 245 to 253 are Extracellular-facing; it reads KTYPPDLTS. A helical membrane pass occupies residues 254-274; the sequence is VFIWETLMAAYPSLHSLMLIM. Residues 275–299 are Cytoplasmic-facing; that stretch reads GIPRVKQTCQKILWKTVCARRCWGP.

This sequence belongs to the G-protein coupled receptor T2R family.

It localises to the membrane. In terms of biological role, receptor that may play a role in the perception of bitterness and is gustducin-linked. May play a role in sensing the chemical composition of the gastrointestinal content. The activity of this receptor may stimulate alpha gustducin, mediate PLC-beta-2 activation and lead to the gating of TRPM5. In Papio hamadryas (Hamadryas baboon), this protein is Taste receptor type 2 member 5 (TAS2R5).